Here is a 55-residue protein sequence, read N- to C-terminus: Large ribosomal subunit protein bL33 (55 aa).

It belongs to the bacterial ribosomal protein bL33 family.

The protein is Large ribosomal subunit protein bL33 of Pseudarthrobacter chlorophenolicus (strain ATCC 700700 / DSM 12829 / CIP 107037 / JCM 12360 / KCTC 9906 / NCIMB 13794 / A6) (Arthrobacter chlorophenolicus).